The sequence spans 465 residues: Pleckstrin homology domain-containing family S member 1 (465 aa).

Positions 14 to 129 (EVCKQDYFIK…WVSFMSSFRQ (116 aa)) constitute a PH domain. A compositionally biased stretch (polar residues) spans 159-173 (PSSTSEAVGSSSPRN). 2 disordered regions span residues 159–179 (PSSTSEAVGSSSPRNGLQDKH) and 258–283 (ETSHESVDSSKEEPQTLPETQDGDLH). The span at 258–271 (ETSHESVDSSKEEP) shows a compositional bias: basic and acidic residues.

The sequence is that of Pleckstrin homology domain-containing family S member 1 from Homo sapiens (Human).